The following is a 146-amino-acid chain: MSILDEFKSFIAKGNVMDMAVGIIIGAAFTGIVSSLVADLINPIIGLITGGIDFSNLFVNLGDGDYASLAAARDAGAPVFAYGSFITAVINFLIIAWVVFLLVKIVNRVKDAAIHKSAKEAEAQPAGPTQEQLLAEIRDLLKRSPA.

The next 3 helical transmembrane spans lie at 21–41, 44–64, and 83–103; these read VGII…ADLI, IIGL…LGDG, and GSFI…FLLV.

It belongs to the MscL family. As to quaternary structure, homopentamer.

It is found in the cell inner membrane. Its function is as follows. Channel that opens in response to stretch forces in the membrane lipid bilayer. May participate in the regulation of osmotic pressure changes within the cell. The protein is Large-conductance mechanosensitive channel of Cereibacter sphaeroides (strain ATCC 17029 / ATH 2.4.9) (Rhodobacter sphaeroides).